Consider the following 187-residue polypeptide: GTP cyclohydrolase 1 (187 aa).

C76, H79, and C148 together coordinate Zn(2+).

It belongs to the GTP cyclohydrolase I family. In terms of assembly, toroid-shaped homodecamer, composed of two pentamers of five dimers.

The catalysed reaction is GTP + H2O = 7,8-dihydroneopterin 3'-triphosphate + formate + H(+). Its pathway is cofactor biosynthesis; 7,8-dihydroneopterin triphosphate biosynthesis; 7,8-dihydroneopterin triphosphate from GTP: step 1/1. This chain is GTP cyclohydrolase 1, found in Streptococcus thermophilus (strain CNRZ 1066).